The primary structure comprises 253 residues: Ribosome-inactivating protein saporin-7 (253 aa).

E176 is an active-site residue.

This sequence belongs to the ribosome-inactivating protein family. Type 1 RIP subfamily.

It carries out the reaction Endohydrolysis of the N-glycosidic bond at one specific adenosine on the 28S rRNA.. Functionally, ribosome-inactivating protein of type 1, inhibits protein synthesis in animal cells. This is Ribosome-inactivating protein saporin-7 (SAP7) from Saponaria officinalis (Common soapwort).